A 353-amino-acid chain; its full sequence is Photosystem II protein D1 (353 aa).

N-acetylthreonine is present on Thr2. Thr2 is subject to Phosphothreonine. Transmembrane regions (helical) follow at residues 29 to 46 (YIGW…TATS), 118 to 133 (HFLL…EWEL), and 142 to 156 (WIAV…AATA). His118 is a binding site for chlorophyll a. Pheophytin a is bound at residue Tyr126. [CaMn4O5] cluster-binding residues include Asp170 and Glu189. The helical transmembrane segment at 197–218 (FHMLGVAGVFGGSLFSAMHGSL) threads the bilayer. Position 198 (His198) interacts with chlorophyll a. A quinone-binding positions include His215 and 264 to 265 (SF). Fe cation is bound at residue His215. His272 lines the Fe cation pocket. A helical transmembrane segment spans residues 274–288 (FLAAWPVVGIWFTAL). His332, Glu333, Asp342, and Ala344 together coordinate [CaMn4O5] cluster. Positions 345 to 353 (AIEAPSTNG) are excised as a propeptide.

It belongs to the reaction center PufL/M/PsbA/D family. PSII is composed of 1 copy each of membrane proteins PsbA, PsbB, PsbC, PsbD, PsbE, PsbF, PsbH, PsbI, PsbJ, PsbK, PsbL, PsbM, PsbT, PsbX, PsbY, PsbZ, Psb30/Ycf12, at least 3 peripheral proteins of the oxygen-evolving complex and a large number of cofactors. It forms dimeric complexes. The cofactor is The D1/D2 heterodimer binds P680, chlorophylls that are the primary electron donor of PSII, and subsequent electron acceptors. It shares a non-heme iron and each subunit binds pheophytin, quinone, additional chlorophylls, carotenoids and lipids. D1 provides most of the ligands for the Mn4-Ca-O5 cluster of the oxygen-evolving complex (OEC). There is also a Cl(-1) ion associated with D1 and D2, which is required for oxygen evolution. The PSII complex binds additional chlorophylls, carotenoids and specific lipids.. Tyr-161 forms a radical intermediate that is referred to as redox-active TyrZ, YZ or Y-Z. In terms of processing, C-terminally processed by CTPA; processing is essential to allow assembly of the oxygen-evolving complex and thus photosynthetic growth.

The protein resides in the plastid. It localises to the chloroplast thylakoid membrane. The catalysed reaction is 2 a plastoquinone + 4 hnu + 2 H2O = 2 a plastoquinol + O2. In terms of biological role, photosystem II (PSII) is a light-driven water:plastoquinone oxidoreductase that uses light energy to abstract electrons from H(2)O, generating O(2) and a proton gradient subsequently used for ATP formation. It consists of a core antenna complex that captures photons, and an electron transfer chain that converts photonic excitation into a charge separation. The D1/D2 (PsbA/PsbD) reaction center heterodimer binds P680, the primary electron donor of PSII as well as several subsequent electron acceptors. The chain is Photosystem II protein D1 from Gossypium barbadense (Sea Island cotton).